A 378-amino-acid polypeptide reads, in one-letter code: DNA replication and repair protein RecF (378 aa).

31–38 serves as a coordination point for ATP; that stretch reads GENGSGKT.

This sequence belongs to the RecF family.

It localises to the cytoplasm. Functionally, the RecF protein is involved in DNA metabolism; it is required for DNA replication and normal SOS inducibility. RecF binds preferentially to single-stranded, linear DNA. It also seems to bind ATP. The protein is DNA replication and repair protein RecF of Teredinibacter turnerae (strain ATCC 39867 / T7901).